A 149-amino-acid chain; its full sequence is Transcriptional repressor NrdR (149 aa).

Residues 3–34 fold into a zinc finger; sequence CPFCAAEETKVVDSRLAADGYQIRRRRECTSC. An ATP-cone domain is found at 49-139; sequence PYVIKNNGNR…VYLSFDDIEE (91 aa).

It belongs to the NrdR family. Zn(2+) is required as a cofactor.

Functionally, negatively regulates transcription of bacterial ribonucleotide reductase nrd genes and operons by binding to NrdR-boxes. In Actinobacillus pleuropneumoniae serotype 3 (strain JL03), this protein is Transcriptional repressor NrdR.